We begin with the raw amino-acid sequence, 395 residues long: Phosphonoacetaldehyde reductase (395 aa).

3 residues coordinate Fe cation: Asp-199, His-268, and His-282.

The protein belongs to the iron-containing alcohol dehydrogenase family. The cofactor is Fe cation.

It carries out the reaction 2-hydroxyethylphosphonate + NAD(+) = phosphonoacetaldehyde + NADH + H(+). It functions in the pathway secondary metabolite biosynthesis; bialaphos biosynthesis. In terms of biological role, catalyzes the reduction of phosphonoacetaldehyde to 2-hydroxyethylphosphonate, a step in the biosynthesis of phosphinothricin tripeptide. Phosphinothricin tripeptide (PTT), also known as bialaphos (BA), is a natural-product antibiotic and potent herbicide. Can use both NAD and NADP but the preferred substrate is NAD. The chain is Phosphonoacetaldehyde reductase (phpC) from Streptomyces viridochromogenes (strain DSM 40736 / JCM 4977 / BCRC 1201 / Tue 494).